The following is a 335-amino-acid chain: MSLPSIKTTNSYCVVLWCDQGSATINAPDRVVQVMAGDVVLAPHGAFVTGHGVVLPMAFPDFDGGEHTRRLHMGTAWSKRMIFEFSRSLLGETRPSECIAALFDDRARPPRVPEPQAARKVAQKLIAYPADQTPLLEFAQLHNISSRTLQRQFVASTGFTFSEWRAALRVSVAADLLAHDFRIGQVSQMVGFSATSSLTRAFKRHTGDTPSSFTSPRMHAVCEQQPPMIPATTTFARASDDIALWIYSGTATVTTPGYCRFMGAGETVTIPSGTSTRLDVSAGSVALPVPLAAAHDDLTLSDVLAASVNPLAAVELQRLSAQERADVEQVLVPSV.

Positions 119 to 216 constitute an HTH araC/xylS-type domain; the sequence is RKVAQKLIAY…GDTPSSFTSP (98 aa). 2 consecutive DNA-binding regions (H-T-H motif) follow at residues 136-157 and 183-206; these read LEFAQLHNISSRTLQRQFVAST and IGQVSQMVGFSATSSLTRAFKRHT.

Functionally, under iron limitation, represses the acn (aconitase), catA (catechol 1,2 dioxygenase), leuCD (isopropylmalate dehydratase), narKGHJI (nitrite/nitrate transporter and nitrate reductase), sdhCAB (succinate dehydrogenase), pta (phosphotransacetylase) and katA (catalase) genes. The protein is HTH-type transcriptional regulator RipA of Corynebacterium diphtheriae (strain ATCC 700971 / NCTC 13129 / Biotype gravis).